Consider the following 384-residue polypeptide: 8-amino-7-oxononanoate synthase (384 aa).

Arg21 is a substrate binding site. 108–109 contacts pyridoxal 5'-phosphate; that stretch reads GF. Residue His133 coordinates substrate. Residues Ser179, His207, and Thr233 each contribute to the pyridoxal 5'-phosphate site. Lys236 bears the N6-(pyridoxal phosphate)lysine mark. Position 352 (Thr352) interacts with substrate.

Belongs to the class-II pyridoxal-phosphate-dependent aminotransferase family. BioF subfamily. As to quaternary structure, homodimer. Pyridoxal 5'-phosphate is required as a cofactor.

It catalyses the reaction 6-carboxyhexanoyl-[ACP] + L-alanine + H(+) = (8S)-8-amino-7-oxononanoate + holo-[ACP] + CO2. It participates in cofactor biosynthesis; biotin biosynthesis. Functionally, catalyzes the decarboxylative condensation of pimeloyl-[acyl-carrier protein] and L-alanine to produce 8-amino-7-oxononanoate (AON), [acyl-carrier protein], and carbon dioxide. The polypeptide is 8-amino-7-oxononanoate synthase (Escherichia coli O6:K15:H31 (strain 536 / UPEC)).